We begin with the raw amino-acid sequence, 427 residues long: Transcobalamin-2 (427 aa).

Positions 1–18 (MRHLGALLFLLGVLGALA) are cleaved as a signal peptide. 3 disulfide bridges follow: cysteine 21–cysteine 267, cysteine 116–cysteine 309, and cysteine 165–cysteine 205. Cob(II)alamin contacts are provided by residues glutamine 104, 152–156 (TSYYQ), histidine 190, 190–194 (HHSVD), asparagine 242, serine 245, glutamine 291, and 395–397 (WQL).

This sequence belongs to the eukaryotic cobalamin transport proteins family. Interacts with CD320 (via LDL-receptor class A domains).

The protein resides in the secreted. Its function is as follows. Primary vitamin B12-binding and transport protein. Delivers cobalamin to cells. In Pongo abelii (Sumatran orangutan), this protein is Transcobalamin-2 (TCN2).